A 123-amino-acid chain; its full sequence is VQ motif-containing protein 29 (123 aa).

The segment at 24–55 (TKNYLTSLHSTRKQPSKPLKRPAISSPLNPMH) is disordered. A compositionally biased stretch (basic residues) spans 33–43 (STRKQPSKPLK). A VQ motif is present at residues 66 to 75 (FKVLVQRLTG). Positions 77–94 (PEHETVQAKPLKTSDDAA) are enriched in basic and acidic residues. The disordered stretch occupies residues 77–123 (PEHETVQAKPLKTSDDAAKQSSSSFAFDPSSSWGDFSFQNPANISRW). Over residues 97–108 (SSSSFAFDPSSS) the composition is skewed to low complexity. Residues 109 to 123 (WGDFSFQNPANISRW) are compositionally biased toward polar residues.

It localises to the nucleus. May function as negative regulator of flowering transition. The polypeptide is VQ motif-containing protein 29 (Arabidopsis thaliana (Mouse-ear cress)).